A 163-amino-acid polypeptide reads, in one-letter code: Thiol peroxidase (163 aa).

In terms of domain architecture, Thioredoxin spans Leu-16 to Ala-162. Cys-58 functions as the Cysteine sulfenic acid (-SOH) intermediate in the catalytic mechanism. Cys-58 and Cys-92 are disulfide-bonded.

This sequence belongs to the peroxiredoxin family. Tpx subfamily. In terms of assembly, homodimer.

The enzyme catalyses a hydroperoxide + [thioredoxin]-dithiol = an alcohol + [thioredoxin]-disulfide + H2O. In terms of biological role, thiol-specific peroxidase that catalyzes the reduction of hydrogen peroxide and organic hydroperoxides to water and alcohols, respectively. Plays a role in cell protection against oxidative stress by detoxifying peroxides. The sequence is that of Thiol peroxidase from Streptococcus pneumoniae serotype 2 (strain D39 / NCTC 7466).